Here is a 305-residue protein sequence, read N- to C-terminus: Putative ABC transporter molybdenum-binding protein HVO_B0369 (305 aa).

Positions 1–40 (MNPDSAAGRSSRRAFLAAVGGVAAGGLTATAGCLGRGEEA) form a signal peptide, tat-type signal.

The protein belongs to the bacterial solute-binding protein 1 family. WtpA subfamily. In terms of assembly, the complex is composed of two ATP-binding proteins, two transmembrane proteins (HVO_B0370) and a solute-binding protein (HVO_B0369). Predicted to be exported by the Tat system. The position of the signal peptide cleavage has not been experimentally proven.

Its function is as follows. Part of an ABC transporter complex involved in molybdenum import. The chain is Putative ABC transporter molybdenum-binding protein HVO_B0369 from Haloferax volcanii (strain ATCC 29605 / DSM 3757 / JCM 8879 / NBRC 14742 / NCIMB 2012 / VKM B-1768 / DS2) (Halobacterium volcanii).